The chain runs to 504 residues: Amyloid-beta A4 precursor protein-binding family B member 3 (504 aa).

A WW domain is found at 29 to 61 (TGLPPGWRKIRDAAGTYYWHVPSGSTQWQRPTW). PID domains are found at residues 111–278 (EPGA…QVEL) and 283–438 (SQAA…RTSS).

Interacts with APP (via intracellular domain). Interacts with APLP1 and APLP2 (via intracellular domain). Expressed predominantly in brain and testis.

The protein localises to the cytoplasm. Its subcellular location is the nucleus. Its function is as follows. May modulate the internalization of amyloid-beta precursor protein. The chain is Amyloid-beta A4 precursor protein-binding family B member 3 from Rattus norvegicus (Rat).